A 138-amino-acid chain; its full sequence is Acidic phospholipase A2 PePLA2 (138 aa).

The first 16 residues, 1-16 (MRTLWIMAVLLLGVEG), serve as a signal peptide directing secretion. Disulfide bonds link cysteine 42-cysteine 131, cysteine 44-cysteine 60, cysteine 59-cysteine 110, cysteine 65-cysteine 138, cysteine 66-cysteine 103, cysteine 73-cysteine 97, and cysteine 91-cysteine 101. The Ca(2+) site is built by tyrosine 43, glycine 45, and glycine 47. Histidine 63 is a catalytic residue. A Ca(2+)-binding site is contributed by aspartate 64. The active site involves aspartate 104.

It belongs to the phospholipase A2 family. Group II subfamily. D49 sub-subfamily. The cofactor is Ca(2+). As to expression, expressed by the venom gland.

The protein resides in the secreted. It carries out the reaction a 1,2-diacyl-sn-glycero-3-phosphocholine + H2O = a 1-acyl-sn-glycero-3-phosphocholine + a fatty acid + H(+). In terms of biological role, PLA2 catalyzes the calcium-dependent hydrolysis of the 2-acyl groups in 3-sn-phosphoglycerides. This chain is Acidic phospholipase A2 PePLA2, found in Protobothrops elegans (Elegant pitviper).